The sequence spans 507 residues: Arylsulfatase A (507 aa).

An N-terminal signal peptide occupies residues 1–18 (MEALWTLTLALAAGLAAA). 3 residues coordinate Ca(2+): Asp29, Asp30, and Cys69. Residue Cys69 is the Nucleophile of the active site. Cys69 carries the post-translational modification 3-oxoalanine (Cys). Residue Lys123 participates in substrate binding. Residue His125 is part of the active site. Ser150 is a binding site for substrate. 2 disulfides stabilise this stretch: Cys156-Cys172 and Cys161-Cys168. The N-linked (GlcNAc...) asparagine glycan is linked to Asn158. The N-linked (GlcNAc...) asparagine glycan is linked to Asn184. His229 provides a ligand contact to substrate. Residues Asp281 and Asn282 each contribute to the Ca(2+) site. Cystine bridges form between Cys300-Cys414, Cys488-Cys500, Cys489-Cys502, and Cys493-Cys499. Lys302 is a binding site for substrate. The N-linked (GlcNAc...) asparagine glycan is linked to Asn350.

It belongs to the sulfatase family. Homodimer at neutral pH and homooctamer at acidic pH. Exists both as a single chain of 58 kDa (component A) or as a chain of 50 kDa (component B) linked by disulfide bond(s) to a 7 kDa chain (component C). Interacts with SUMF1. Ca(2+) serves as cofactor. The conversion to 3-oxoalanine (also known as C-formylglycine, FGly), of a serine or cysteine residue in prokaryotes and of a cysteine residue in eukaryotes, is critical for catalytic activity. This post-translational modification is severely defective in multiple sulfatase deficiency (MSD).

The protein resides in the endoplasmic reticulum. It is found in the lysosome. The enzyme catalyses an N-acyl-1-beta-D-(3-O-sulfo)-galactosyl-sphing-4-enine + H2O = a beta-D-galactosyl-(1&lt;-&gt;1')-N-acylsphing-4-enine + sulfate + H(+). Functionally, hydrolyzes cerebroside sulfate. This is Arylsulfatase A (ARSA) from Bos taurus (Bovine).